Reading from the N-terminus, the 296-residue chain is uncharacterized protein (296 aa).

A coiled-coil region spans residues 129–170 (VKELKDLIRTVADEHMKMKREHEAAMKELTLLINNQKQQQQQ). The interval 165–187 (KQQQQQPVPMPRNSTATRPKNLA) is disordered.

This is an uncharacterized protein from Ostreid herpesvirus 1 (isolate France) (OsHV-1).